The sequence spans 373 residues: Partitioning protein REP1 (373 aa).

Positions 1–76 (MNGERLLACI…EKELDWPDPA (76 aa)) are interaction with REP2. The interval 1–129 (MNGERLLACI…LNRRGKGIRR (129 aa)) is interaction with REP2 and self-association. The interval 349-373 (FEEHWKPVDVEVEFRCKFKERKVDG) is nuclear localization.

In terms of assembly, interacts with REP2.

Its subcellular location is the nucleus. Part of the plasmid partitioning system, which ensures the equal distribution of replicated plasmid molecules to daughter cells. The plasmids exist as well-organized plasmid foci within the nucleus that stay together throughout the cell-cycle and act as entity during segregation, effetively reducing copy number to one. Plasmid partitioning requires the proteins REP1, REP2, and a cis-acting locus STB (REP3). REP1-REP2 stably associate with CSE4-containing chromatin at STB during S-phase, marking the locus with a centromeric tag, and thereby probably catching mitotic spindle microtubules to the plasmid cluster and coupling plasmid segregation to chromosome segregation. REP1-REP2 are required to recruit the cohesin complex to the STB locus for pairing of the replicated plasmid cluster, a prerequisite for successful plasmid segregation. REP1-REP2 also negatively regulate expression of site-specific recombinase FLP and of RAF1. In Saccharomyces cerevisiae (strain ATCC 204508 / S288c) (Baker's yeast), this protein is Partitioning protein REP1 (REP1).